Here is a 349-residue protein sequence, read N- to C-terminus: Probable dual-specificity RNA methyltransferase RlmN (349 aa).

Catalysis depends on Glu93, which acts as the Proton acceptor. Positions 99–329 (YKHGNTICVS…TTIRREMGSD (231 aa)) constitute a Radical SAM core domain. Cysteines 106 and 334 form a disulfide. [4Fe-4S] cluster contacts are provided by Cys113, Cys117, and Cys120. Residues 160–161 (GE), Ser192, 215–217 (SLH), and Asn291 each bind S-adenosyl-L-methionine. The active-site S-methylcysteine intermediate is Cys334.

It belongs to the radical SAM superfamily. RlmN family. [4Fe-4S] cluster is required as a cofactor.

Its subcellular location is the cytoplasm. The enzyme catalyses adenosine(2503) in 23S rRNA + 2 reduced [2Fe-2S]-[ferredoxin] + 2 S-adenosyl-L-methionine = 2-methyladenosine(2503) in 23S rRNA + 5'-deoxyadenosine + L-methionine + 2 oxidized [2Fe-2S]-[ferredoxin] + S-adenosyl-L-homocysteine. It catalyses the reaction adenosine(37) in tRNA + 2 reduced [2Fe-2S]-[ferredoxin] + 2 S-adenosyl-L-methionine = 2-methyladenosine(37) in tRNA + 5'-deoxyadenosine + L-methionine + 2 oxidized [2Fe-2S]-[ferredoxin] + S-adenosyl-L-homocysteine. Its function is as follows. Specifically methylates position 2 of adenine 2503 in 23S rRNA and position 2 of adenine 37 in tRNAs. The polypeptide is Probable dual-specificity RNA methyltransferase RlmN (Clostridium tetani (strain Massachusetts / E88)).